Reading from the N-terminus, the 347-residue chain is MLNDRAQRLLKTLVERYIADGQPVGSRTLTQLSGLDISPASVRNVMAELEDMGLVASPHTSAGRVPTARGYRVFVDKLLTMHPLEQQALRQVESGIHPDSPLRMAAAASQLLSDLTHFAGVVITPQRADAAFRQIEFLRLSEKRILLILVTPLGDVQNHLLVTDRDYTPGELIETANYLNHHYAGQSLEHITRDLEQELASLQGHIARLMTAAIHASKEATSQDDIVVSGEKRLLSVEELSSDLASLRRLFDMFEHKTELLHLLNISRQAQGVSLFIGEESGLSPLDGCTVVTAPYTFDGTRVGTLGVVGPTRMNYERVIPIVDITARLVSSALSSPLSGSDAPSSH.

It belongs to the HrcA family.

Negative regulator of class I heat shock genes (grpE-dnaK-dnaJ and groELS operons). Prevents heat-shock induction of these operons. This chain is Heat-inducible transcription repressor HrcA, found in Laribacter hongkongensis (strain HLHK9).